Here is a 288-residue protein sequence, read N- to C-terminus: Shikimate dehydrogenase (NADP(+)) (288 aa).

Residues 15–17 (SKS) and T64 each bind shikimate. Residue K68 is the Proton acceptor of the active site. E83 lines the NADP(+) pocket. Shikimate-binding residues include N92 and D117. NADP(+)-binding positions include 141-145 (GAGGA), 165-170 (NRTVSK), and M232. Y234 provides a ligand contact to shikimate. An NADP(+)-binding site is contributed by G254.

This sequence belongs to the shikimate dehydrogenase family. In terms of assembly, homodimer.

It carries out the reaction shikimate + NADP(+) = 3-dehydroshikimate + NADPH + H(+). It functions in the pathway metabolic intermediate biosynthesis; chorismate biosynthesis; chorismate from D-erythrose 4-phosphate and phosphoenolpyruvate: step 4/7. Functionally, involved in the biosynthesis of the chorismate, which leads to the biosynthesis of aromatic amino acids. Catalyzes the reversible NADPH linked reduction of 3-dehydroshikimate (DHSA) to yield shikimate (SA). This Psychrobacter cryohalolentis (strain ATCC BAA-1226 / DSM 17306 / VKM B-2378 / K5) protein is Shikimate dehydrogenase (NADP(+)).